A 671-amino-acid chain; its full sequence is Preterminal protein (671 aa).

Positions 380–389 (RLPVRRRRRR) match the Nuclear localization signal motif. Positions 386–409 (RRRRVPPPPPPPEEEEEGEALMEE) are disordered. Residues 397 to 409 (PEEEEEGEALMEE) show a composition bias toward acidic residues. S580 is modified (O-(5'-phospho-DNA)-serine). Residues 645–671 (GADVPLPPLPAGPEPPLPPGARPRHRF) are disordered. Residues 649–665 (PLPPLPAGPEPPLPPGA) show a composition bias toward pro residues.

This sequence belongs to the adenoviridae terminal protein family. Heterodimer with the polymerase; this heterodimer binds to bp 9 to 18 of the genome. Interacts with host POU2F1; POU2F1 binds to the auxiliary sequences in the inverted terminal repeats and tethers the pTP-POL heterodimer to the origin DNA thereby participating in the assembly of the pre-initiation complex (POL-TP-DBP-NFIA-POU2F1). Preterminal protein is used to replicate viral genome, upon genomic encapsidation it is processed first into iTP and finally into TP by adenovirus protease.

The protein resides in the host nucleus matrix. In terms of biological role, protein covalently bound to the viral DNA that acts as a primer for viral genomic replication by DNA strand displacement. Assembles on the viral origin of replication in an initiation complex with viral polymerase, DBP, host NFIA and host POU2F1/OCT1. During initiation, the polymerase covalently couples the first dCTP with Ser-580 of pTP. The terminal protein stimulates the template activity over 20 fold compared to protein-free templates. Neo-synthesized viral genomes are linked to two preterminal proteins, one for each 5' end. These new genomes are encapsidated in the nucleus, and during capsid maturation by viral protease, preterminal protein is first cleaved into intermediary (iTP), then into mature TP. May play a role in host nuclear matrix localization of genomic DNA. In Homo sapiens (Human), this protein is Preterminal protein.